The chain runs to 565 residues: MELEHESKRPLYIPYAGPILLEFPLLNKGSAFSEEERSTFNLHGLLPEAVETIEEQVERAYRQYLDFKNDNDKHIYLRNIQDTNETLFYRLLESHLTEMMPIIYTPTVGEACEHFSDIYRRARGLFISYPNRANIDDMLQNATKQNVKVIVVTDGERILGLGDQGIGGMGIPIGKLSLYTACGGISPAYTLPVVLDVGTNNPQRLNDPLYMGWRHPRITGDEYNEFVDEFIQAVKRRWPNVLLQFEDFAQKNAMPLLNRYRDELCCFNDDIQGTAAVTLGSLIAASRAAGRQLKDQTVAFLGAGSAGCGIAEQIIAQMKSEGLSDEQARARIFMVDRFGLLTDKLPNLLDFQSKLIQKSETLADWQTETDAISLLEVVKNAKPTILIGVSGQAGLFTEEIIREMHKHCERPTVMPLSNPTSRVEARPEDIINWTDGQALVATGSPFAPVTYKEKVYPIAQCNNSYIFPGIGLGVIASGAKRVTDAMLMVASRALADCSPMAKEGDGPLLPLLADIQQVSRYIAKQVAKEAQVQGVATVTSDSALEEAIERNYWEPEYRIYKRTSF.

Tyr104 serves as the catalytic Proton donor. Residue Arg157 coordinates NAD(+). The active-site Proton acceptor is the Lys175. Positions 246, 247, and 270 each coordinate a divalent metal cation. Asp270 and Asn418 together coordinate NAD(+).

The protein belongs to the malic enzymes family. Homotetramer. The cofactor is Mg(2+). Mn(2+) serves as cofactor.

It catalyses the reaction (S)-malate + NAD(+) = pyruvate + CO2 + NADH. The enzyme catalyses oxaloacetate + H(+) = pyruvate + CO2. The sequence is that of NAD-dependent malic enzyme from Proteus mirabilis (strain HI4320).